Here is a 238-residue protein sequence, read N- to C-terminus: Ribonuclease-like storage protein (238 aa).

A signal peptide spans 1–23 (MRAIYIISVIIVSLSIFSWGGNA). Q37 contacts RNA. C43 and C49 are oxidised to a cystine. RNA is bound by residues H61, F109, 112-113 (HE), and 116-117 (KH). H61 serves as the catalytic Proton donor. Intrachain disulfides connect C76–C120 and C196–C207. The active site involves E113. Catalysis depends on H117, which acts as the Proton acceptor.

The protein belongs to the RNase T2 family. In terms of assembly, homodimer. In terms of tissue distribution, root.

Its function is as follows. May act as a storage protein providing a nitrogen source. Seems to have no RNase activity although it has conserved the active site residues. The protein is Ribonuclease-like storage protein of Panax ginseng (Korean ginseng).